The sequence spans 171 residues: Lipoprotein signal peptidase (171 aa).

The next 3 membrane-spanning stretches (helical) occupy residues 12–32, 67–87, and 93–113; these read WYWV…WVLA, WQRW…TVWL, and SLLK…GNLV. Active-site residues include Asp123 and Asp141. The chain crosses the membrane as a helical span at residues 137–157; the sequence is FNIADSAICIGAVLIIWDAFL.

The protein belongs to the peptidase A8 family.

The protein localises to the cell inner membrane. It carries out the reaction Release of signal peptides from bacterial membrane prolipoproteins. Hydrolyzes -Xaa-Yaa-Zaa-|-(S,diacylglyceryl)Cys-, in which Xaa is hydrophobic (preferably Leu), and Yaa (Ala or Ser) and Zaa (Gly or Ala) have small, neutral side chains.. Its pathway is protein modification; lipoprotein biosynthesis (signal peptide cleavage). This protein specifically catalyzes the removal of signal peptides from prolipoproteins. The chain is Lipoprotein signal peptidase from Shewanella baltica (strain OS223).